The sequence spans 156 residues: Small ribosomal subunit protein uS7 (156 aa).

Belongs to the universal ribosomal protein uS7 family. As to quaternary structure, part of the 30S ribosomal subunit. Contacts proteins S9 and S11.

Its function is as follows. One of the primary rRNA binding proteins, it binds directly to 16S rRNA where it nucleates assembly of the head domain of the 30S subunit. Is located at the subunit interface close to the decoding center, probably blocks exit of the E-site tRNA. The polypeptide is Small ribosomal subunit protein uS7 (Rhodopseudomonas palustris (strain BisA53)).